We begin with the raw amino-acid sequence, 204 residues long: Small ribosomal subunit protein uS4 (204 aa).

The S4 RNA-binding domain maps to 93–156; it reads SRLSSVLYHS…AKIPVVVEAE (64 aa).

The protein belongs to the universal ribosomal protein uS4 family. Part of the 30S ribosomal subunit. Contacts protein S5. The interaction surface between S4 and S5 is involved in control of translational fidelity.

Its function is as follows. One of the primary rRNA binding proteins, it binds directly to 16S rRNA where it nucleates assembly of the body of the 30S subunit. In terms of biological role, with S5 and S12 plays an important role in translational accuracy. This Wolbachia pipientis wMel protein is Small ribosomal subunit protein uS4.